Consider the following 343-residue polypeptide: Ferrochelatase (343 aa).

His211 and Glu292 together coordinate Fe cation.

This sequence belongs to the ferrochelatase family.

It is found in the cytoplasm. It catalyses the reaction heme b + 2 H(+) = protoporphyrin IX + Fe(2+). It functions in the pathway porphyrin-containing compound metabolism; protoheme biosynthesis; protoheme from protoporphyrin-IX: step 1/1. In terms of biological role, catalyzes the ferrous insertion into protoporphyrin IX. This is Ferrochelatase from Gluconobacter oxydans (strain 621H) (Gluconobacter suboxydans).